A 168-amino-acid chain; its full sequence is Dihydrofolate reductase (168 aa).

One can recognise a DHFR domain in the interval 1 to 159 (MISFIFAMDA…YDYEFLMYEK (159 aa)). Residue 5–7 (IFA) participates in substrate binding. NADP(+) is bound by residues 6-7 (FA) and 14-19 (IGKDND). D27 provides a ligand contact to substrate. NADP(+) is bound at residue 43 to 46 (GRKT). Position 57 (R57) interacts with substrate. Residues 62 to 65 (VTSA) and 95 to 100 (IGGAQL) contribute to the NADP(+) site. Residue T114 coordinates substrate.

This sequence belongs to the dihydrofolate reductase family.

It carries out the reaction (6S)-5,6,7,8-tetrahydrofolate + NADP(+) = 7,8-dihydrofolate + NADPH + H(+). Its pathway is cofactor biosynthesis; tetrahydrofolate biosynthesis; 5,6,7,8-tetrahydrofolate from 7,8-dihydrofolate: step 1/1. Its function is as follows. Key enzyme in folate metabolism. Catalyzes an essential reaction for de novo glycine and purine synthesis, and for DNA precursor synthesis. This is Dihydrofolate reductase (dfrA) from Bacillus subtilis (strain 168).